Reading from the N-terminus, the 175-residue chain is NADH-ubiquinone oxidoreductase chain 6 (175 aa).

5 helical membrane passes run 1–21 (MVTYIVFVLSIIFVISFVGVS), 25–45 (SPIYGGLGLIVGGGAGCGVVL), 47–67 (FGGSFLGLMVFLIYLGGMLVV), 88–108 (VVLGAFILGLVVESLIVIYAL), and 149–169 (YGVWLVIVTGWSLFVSVVIIM).

It belongs to the complex I subunit 6 family. Core subunit of respiratory chain NADH dehydrogenase (Complex I) which is composed of 45 different subunits.

Its subcellular location is the mitochondrion inner membrane. The enzyme catalyses a ubiquinone + NADH + 5 H(+)(in) = a ubiquinol + NAD(+) + 4 H(+)(out). Core subunit of the mitochondrial membrane respiratory chain NADH dehydrogenase (Complex I) which catalyzes electron transfer from NADH through the respiratory chain, using ubiquinone as an electron acceptor. Essential for the catalytic activity and assembly of complex I. The polypeptide is NADH-ubiquinone oxidoreductase chain 6 (MT-ND6) (Balaenoptera musculus (Blue whale)).